We begin with the raw amino-acid sequence, 311 residues long: Mediator of RNA polymerase II transcription subunit 27 (311 aa).

Position 132 is a phosphoserine (Ser-132). At Lys-134 the chain carries N6-methyllysine.

Belongs to the Mediator complex subunit 27 family. In terms of assembly, component of the Mediator complex, which is composed of MED1, MED4, MED6, MED7, MED8, MED9, MED10, MED11, MED12, MED13, MED13L, MED14, MED15, MED16, MED17, MED18, MED19, MED20, MED21, MED22, MED23, MED24, MED25, MED26, MED27, MED29, MED30, MED31, CCNC, CDK8 and CDC2L6/CDK11. The MED12, MED13, CCNC and CDK8 subunits form a distinct module termed the CDK8 module. Mediator containing the CDK8 module is less active than Mediator lacking this module in supporting transcriptional activation. Individual preparations of the Mediator complex lacking one or more distinct subunits have been variously termed ARC, CRSP, DRIP, PC2, SMCC and TRAP.

The protein localises to the nucleus. In terms of biological role, component of the Mediator complex, a coactivator involved in the regulated transcription of nearly all RNA polymerase II-dependent genes. Mediator functions as a bridge to convey information from gene-specific regulatory proteins to the basal RNA polymerase II transcription machinery. Mediator is recruited to promoters by direct interactions with regulatory proteins and serves as a scaffold for the assembly of a functional preinitiation complex with RNA polymerase II and the general transcription factors. In Mus musculus (Mouse), this protein is Mediator of RNA polymerase II transcription subunit 27 (Med27).